A 239-amino-acid chain; its full sequence is Small ribosomal subunit protein uS2 (239 aa).

It belongs to the universal ribosomal protein uS2 family.

The protein is Small ribosomal subunit protein uS2 of Francisella tularensis subsp. tularensis (strain WY96-3418).